The chain runs to 190 residues: dCTP deaminase, dUMP-forming (190 aa).

Residues 101 to 106 (KSSLGR), Asp-119, 127 to 129 (TLE), Gln-148, Tyr-162, and Gln-174 each bind dCTP. Glu-129 (proton donor/acceptor) is an active-site residue. A disordered region spans residues 162-184 (YGSAKVGSKYQGQRGPTPSRSYQ). The segment covering 171 to 184 (YQGQRGPTPSRSYQ) has biased composition (polar residues).

This sequence belongs to the dCTP deaminase family. In terms of assembly, homotrimer.

It catalyses the reaction dCTP + 2 H2O = dUMP + NH4(+) + diphosphate. The protein operates within pyrimidine metabolism; dUMP biosynthesis; dUMP from dCTP: step 1/1. Its function is as follows. Bifunctional enzyme that catalyzes both the deamination of dCTP to dUTP and the hydrolysis of dUTP to dUMP without releasing the toxic dUTP intermediate. The sequence is that of dCTP deaminase, dUMP-forming from Mycobacterium sp. (strain JLS).